We begin with the raw amino-acid sequence, 1620 residues long: NAD-specific glutamate dehydrogenase (1620 aa).

The active site involves Lys851.

Belongs to the Glu/Leu/Phe/Val dehydrogenases family. As to quaternary structure, homotetramer. Contains disulfide bonds (interchain).

It catalyses the reaction L-glutamate + NAD(+) + H2O = 2-oxoglutarate + NH4(+) + NADH + H(+). Activity subject to allosteric control by arginine and citrate, which function as positive and negative effectors, respectively. In terms of biological role, involved in arginine catabolism by converting L-glutamate, into 2-oxoglutarate, which is then channeled into the tricarboxylic acid cycle. Can also utilize other amino acids of the glutamate family. The polypeptide is NAD-specific glutamate dehydrogenase (gdhB) (Pseudomonas aeruginosa (strain ATCC 15692 / DSM 22644 / CIP 104116 / JCM 14847 / LMG 12228 / 1C / PRS 101 / PAO1)).